The sequence spans 249 residues: Tryptophan synthase alpha chain (249 aa).

Active-site proton acceptor residues include Glu43 and Asp54.

It belongs to the TrpA family. In terms of assembly, tetramer of two alpha and two beta chains.

It catalyses the reaction (1S,2R)-1-C-(indol-3-yl)glycerol 3-phosphate + L-serine = D-glyceraldehyde 3-phosphate + L-tryptophan + H2O. The protein operates within amino-acid biosynthesis; L-tryptophan biosynthesis; L-tryptophan from chorismate: step 5/5. The alpha subunit is responsible for the aldol cleavage of indoleglycerol phosphate to indole and glyceraldehyde 3-phosphate. This Campylobacter jejuni subsp. jejuni serotype O:23/36 (strain 81-176) protein is Tryptophan synthase alpha chain.